Here is a 229-residue protein sequence, read N- to C-terminus: Coiled-coil domain-containing protein 134 (229 aa).

Residues 1-22 form the signal peptide; it reads MDLLQFLAAFSVLLWPGTEVTG. N148 carries an N-linked (GlcNAc...) asparagine glycan. The disordered stretch occupies residues 182–229; the sequence is FKTDQTEFIPSTDPFQKALREEEKRRKKEERRKEIRKGPRISRSQSEL. The stretch at 196 to 218 forms a coiled coil; the sequence is FQKALREEEKRRKKEERRKEIRK. The Prevents secretion from ER motif lies at 226–229; the sequence is QSEL.

It belongs to the CCDC134 family. As to quaternary structure, interacts with TADA2A. Associates with the PCAF complex via TADA2A binding. O-glycosylated, with additional sialic acid modifications.

The protein localises to the endoplasmic reticulum lumen. The protein resides in the secreted. It localises to the cytoplasm. It is found in the nucleus. In terms of biological role, molecular adapter required to prevent protein hyperglycosylation of HSP90B1: during translation, associates with nascent HSP90B1 and the STT3A catalytic component of the OST-A complex and tethers them to a specialized translocon that forms a microenvironment for HSP90B1 folding. In the CCDC134-containing translocon, STT3A associates with the SRT pseudosubstrate motif of HSP90B1, preventing access to facultative glycosylation sites until folding is completed, preventing hyperglycosylation and subsequent degradation of HSP90B1. In extracellular secreted form, promotes proliferation and activation of CD8(+) T-cells, suggesting a cytokine-like function. May inhibit ERK and JNK signaling activity. May suppress cell migration and invasion activity, via its effects on ERK and JNK signaling. May also localize in the nucleus: enhances stability of the PCAF histone acetyltransferase (HAT) complex member TADA2A and thus promotes PCAF-mediated histone acetyltransferase activity. Has a critical role in the regulation of osteogenesis and bone development. This chain is Coiled-coil domain-containing protein 134 (Ccdc134), found in Mus musculus (Mouse).